Consider the following 239-residue polypeptide: 4-hydroxy-tetrahydrodipicolinate reductase (239 aa).

NAD(+) contacts are provided by residues 8–13 (GSTGKM), 78–80 (GTT), and 102–105 (SANM). Residue His134 is the Proton donor/acceptor of the active site. Residue His135 coordinates (S)-2,3,4,5-tetrahydrodipicolinate. The Proton donor role is filled by Lys138. 144-145 (GT) is a (S)-2,3,4,5-tetrahydrodipicolinate binding site.

Belongs to the DapB family.

Its subcellular location is the cytoplasm. The enzyme catalyses (S)-2,3,4,5-tetrahydrodipicolinate + NAD(+) + H2O = (2S,4S)-4-hydroxy-2,3,4,5-tetrahydrodipicolinate + NADH + H(+). The catalysed reaction is (S)-2,3,4,5-tetrahydrodipicolinate + NADP(+) + H2O = (2S,4S)-4-hydroxy-2,3,4,5-tetrahydrodipicolinate + NADPH + H(+). The protein operates within amino-acid biosynthesis; L-lysine biosynthesis via DAP pathway; (S)-tetrahydrodipicolinate from L-aspartate: step 4/4. Functionally, catalyzes the conversion of 4-hydroxy-tetrahydrodipicolinate (HTPA) to tetrahydrodipicolinate. The chain is 4-hydroxy-tetrahydrodipicolinate reductase from Rickettsia africae (strain ESF-5).